The primary structure comprises 346 residues: Sensor protein kinase GraS (346 aa).

2 consecutive transmembrane segments (helical) span residues 15–35 (MNWI…SLID) and 43–63 (LFYI…LTYF). The 207-residue stretch at 126–332 (EFVHDIKTPV…TVRLIFPLQN (207 aa)) folds into the Histidine kinase domain.

Interacts with GraX.

Its subcellular location is the cell membrane. It catalyses the reaction ATP + protein L-histidine = ADP + protein N-phospho-L-histidine.. Member of the two-component regulatory system GraR/GraS involved in resistance against cationic antimicrobial peptides (CAMPs). Functions as a sensor protein kinase which phosphorylates GraR through the auxiliary protein GraX. In turn, GraR up-regulates many genes such as adhesins, exoproteins, transporters, toxins, and proteins involved in cell wall synthesis. Down-regulates the expression of many genes involved in RNA and amino acid synthesis or glycolysis. The sequence is that of Sensor protein kinase GraS (graS) from Staphylococcus aureus (strain MSSA476).